Here is a 252-residue protein sequence, read N- to C-terminus: Pyridoxine 5'-phosphate synthase (252 aa).

Asn-12 is a 3-amino-2-oxopropyl phosphate binding site. 14-15 (DH) provides a ligand contact to 1-deoxy-D-xylulose 5-phosphate. Arg-23 is a binding site for 3-amino-2-oxopropyl phosphate. Catalysis depends on His-48, which acts as the Proton acceptor. 2 residues coordinate 1-deoxy-D-xylulose 5-phosphate: Arg-50 and His-55. Glu-75 serves as the catalytic Proton acceptor. Residue Thr-105 coordinates 1-deoxy-D-xylulose 5-phosphate. The active-site Proton donor is the His-199. Residues Gly-200 and 221 to 222 (GH) each bind 3-amino-2-oxopropyl phosphate.

Belongs to the PNP synthase family. In terms of assembly, homooctamer; tetramer of dimers.

Its subcellular location is the cytoplasm. The enzyme catalyses 3-amino-2-oxopropyl phosphate + 1-deoxy-D-xylulose 5-phosphate = pyridoxine 5'-phosphate + phosphate + 2 H2O + H(+). Its pathway is cofactor biosynthesis; pyridoxine 5'-phosphate biosynthesis; pyridoxine 5'-phosphate from D-erythrose 4-phosphate: step 5/5. Functionally, catalyzes the complicated ring closure reaction between the two acyclic compounds 1-deoxy-D-xylulose-5-phosphate (DXP) and 3-amino-2-oxopropyl phosphate (1-amino-acetone-3-phosphate or AAP) to form pyridoxine 5'-phosphate (PNP) and inorganic phosphate. This Cereibacter sphaeroides (strain ATCC 17029 / ATH 2.4.9) (Rhodobacter sphaeroides) protein is Pyridoxine 5'-phosphate synthase.